A 368-amino-acid polypeptide reads, in one-letter code: 3-dehydroquinate synthase (368 aa).

Residues 112 to 116 (GVIGD), 136 to 137 (TT), Lys-149, Lys-158, and 176 to 179 (TLIT) each bind NAD(+). The Zn(2+) site is built by Glu-191, His-256, and His-273.

Belongs to the sugar phosphate cyclases superfamily. Dehydroquinate synthase family. It depends on Co(2+) as a cofactor. Zn(2+) is required as a cofactor. NAD(+) serves as cofactor.

It localises to the cytoplasm. The catalysed reaction is 7-phospho-2-dehydro-3-deoxy-D-arabino-heptonate = 3-dehydroquinate + phosphate. Its pathway is metabolic intermediate biosynthesis; chorismate biosynthesis; chorismate from D-erythrose 4-phosphate and phosphoenolpyruvate: step 2/7. Functionally, catalyzes the conversion of 3-deoxy-D-arabino-heptulosonate 7-phosphate (DAHP) to dehydroquinate (DHQ). This chain is 3-dehydroquinate synthase, found in Prochlorococcus marinus (strain NATL2A).